A 142-amino-acid chain; its full sequence is Large ribosomal subunit protein uL11 (142 aa).

It belongs to the universal ribosomal protein uL11 family. In terms of assembly, part of the ribosomal stalk of the 50S ribosomal subunit. Interacts with L10 and the large rRNA to form the base of the stalk. L10 forms an elongated spine to which L12 dimers bind in a sequential fashion forming a multimeric L10(L12)X complex. One or more lysine residues are methylated.

Functionally, forms part of the ribosomal stalk which helps the ribosome interact with GTP-bound translation factors. This is Large ribosomal subunit protein uL11 from Bradyrhizobium diazoefficiens (strain JCM 10833 / BCRC 13528 / IAM 13628 / NBRC 14792 / USDA 110).